Consider the following 233-residue polypeptide: ATP-dependent dethiobiotin synthetase BioD (233 aa).

ATP is bound at residue 12 to 17 (EVGKTY). Thr16 contributes to the Mg(2+) binding site. Residue Lys37 is part of the active site. ATP contacts are provided by residues Asp54, 120–123 (EGAG), and 186–187 (ND). Asp54 and Glu120 together coordinate Mg(2+).

This sequence belongs to the dethiobiotin synthetase family. Homodimer. The cofactor is Mg(2+).

It is found in the cytoplasm. It carries out the reaction (7R,8S)-7,8-diammoniononanoate + CO2 + ATP = (4R,5S)-dethiobiotin + ADP + phosphate + 3 H(+). The protein operates within cofactor biosynthesis; biotin biosynthesis; biotin from 7,8-diaminononanoate: step 1/2. Functionally, catalyzes a mechanistically unusual reaction, the ATP-dependent insertion of CO2 between the N7 and N8 nitrogen atoms of 7,8-diaminopelargonic acid (DAPA, also called 7,8-diammoniononanoate) to form a ureido ring. This is ATP-dependent dethiobiotin synthetase BioD from Alteromonas mediterranea (strain DSM 17117 / CIP 110805 / LMG 28347 / Deep ecotype).